Reading from the N-terminus, the 236-residue chain is Ribose-5-phosphate isomerase A (236 aa).

Substrate is bound by residues 29–32, 86–89, and 99–102; these read SGST, DGAD, and KGGG. The active-site Proton acceptor is the E108. Residue K126 participates in substrate binding.

Belongs to the ribose 5-phosphate isomerase family. Homodimer.

The enzyme catalyses aldehydo-D-ribose 5-phosphate = D-ribulose 5-phosphate. The protein operates within carbohydrate degradation; pentose phosphate pathway; D-ribose 5-phosphate from D-ribulose 5-phosphate (non-oxidative stage): step 1/1. Its function is as follows. Catalyzes the reversible conversion of ribose-5-phosphate to ribulose 5-phosphate. The polypeptide is Ribose-5-phosphate isomerase A (Prochlorococcus marinus (strain NATL1A)).